A 78-amino-acid polypeptide reads, in one-letter code: Acyl carrier protein (78 aa).

The 76-residue stretch at 1–76 (MALFEDIQAV…DVVKYIEDNK (76 aa)) folds into the Carrier domain. An O-(pantetheine 4'-phosphoryl)serine modification is found at S36.

This sequence belongs to the acyl carrier protein (ACP) family. In terms of processing, 4'-phosphopantetheine is transferred from CoA to a specific serine of apo-ACP by AcpS. This modification is essential for activity because fatty acids are bound in thioester linkage to the sulfhydryl of the prosthetic group.

Its subcellular location is the cytoplasm. It participates in lipid metabolism; fatty acid biosynthesis. Its function is as follows. Carrier of the growing fatty acid chain in fatty acid biosynthesis. The protein is Acyl carrier protein of Helicobacter pylori (strain ATCC 700392 / 26695) (Campylobacter pylori).